We begin with the raw amino-acid sequence, 571 residues long: PHD and RING finger domain-containing protein C126.07c (571 aa).

An RING-type 1; atypical zinc finger spans residues 18 to 79; it reads CIICLSNLPN…RVANTCPLCR (62 aa). Residues 122 to 170 form a PHD-type zinc finger; that stretch reads TCRCVICGRSDHAEVLLLCDGCDDAYHTYCLNMDAVPIEEFYCPNCVLL. An RING-type 2; degenerate zinc finger spans residues 125 to 168; it reads CVICGRSDHAEVLLLCDGCDDAYHTYCLNMDAVPIEEFYCPNCV. Positions 305–324 are enriched in polar residues; sequence ATEATISNPRPSSGRFQQTP. The disordered stretch occupies residues 305-377; sequence ATEATISNPR…VLGNNSSSKS (73 aa). Residues 346-356 are compositionally biased toward basic residues; that stretch reads RRQKRPTRRHI. Over residues 359-377 the composition is skewed to polar residues; the sequence is SNKSSGSSTVLGNNSSSKS.

Its subcellular location is the cytoplasm. It localises to the nucleus. This is PHD and RING finger domain-containing protein C126.07c from Schizosaccharomyces pombe (strain 972 / ATCC 24843) (Fission yeast).